Consider the following 428-residue polypeptide: GTPase Obg (428 aa).

Residues 1–158 enclose the Obg domain; the sequence is MFVDQVKIYV…RYIVLELKVL (158 aa). The segment at 118 to 143 is disordered; sequence KGGRGGRGNTRFATPANPAPQLSENG. The OBG-type G domain maps to 159-329; the sequence is ADVGLVGFPS…LLFEIADRLE (171 aa). GTP is bound by residues 165 to 172, 190 to 194, 212 to 215, 282 to 285, and 310 to 312; these read GFPSVGKS, FTTLN, DLPG, NKMD, and SAV. Mg(2+)-binding residues include Ser172 and Thr192. The OCT domain occupies 350–428; that stretch reads KLEDEEAPFE…LLEFEFEFID (79 aa).

Belongs to the TRAFAC class OBG-HflX-like GTPase superfamily. OBG GTPase family. Monomer. Requires Mg(2+) as cofactor.

It localises to the cytoplasm. Its function is as follows. An essential GTPase which binds GTP, GDP and possibly (p)ppGpp with moderate affinity, with high nucleotide exchange rates and a fairly low GTP hydrolysis rate. Plays a role in control of the cell cycle, stress response, ribosome biogenesis and in those bacteria that undergo differentiation, in morphogenesis control. In Bacillus licheniformis (strain ATCC 14580 / DSM 13 / JCM 2505 / CCUG 7422 / NBRC 12200 / NCIMB 9375 / NCTC 10341 / NRRL NRS-1264 / Gibson 46), this protein is GTPase Obg.